Here is a 126-residue protein sequence, read N- to C-terminus: Probable flagellum biosynthesis repressor protein FlbT (126 aa).

It belongs to the FlbT family.

Functionally, has a post-transcriptional repressor function in flagellum biogenesis. Associates with the 5'-UTR of fljK mRNA and promotes its degradation. This is Probable flagellum biosynthesis repressor protein FlbT from Rhodopseudomonas palustris (strain ATCC BAA-98 / CGA009).